Reading from the N-terminus, the 154-residue chain is Urease accessory protein UreE (154 aa).

The tract at residues 135–154 (PENGAYHGTGGHHHHHHDHE) is disordered. Positions 144 to 154 (GGHHHHHHDHE) are enriched in basic residues.

Belongs to the UreE family.

It is found in the cytoplasm. Its function is as follows. Involved in urease metallocenter assembly. Binds nickel. Probably functions as a nickel donor during metallocenter assembly. The chain is Urease accessory protein UreE from Teredinibacter turnerae (strain ATCC 39867 / T7901).